The following is a 141-amino-acid chain: Hemoglobin subunit alpha (141 aa).

Residues 1 to 141 (VLSPADKTNV…VSTVLTSKYR (141 aa)) enclose the Globin domain. Ser3 carries the phosphoserine modification. An N6-succinyllysine modification is found at Lys7. The residue at position 8 (Thr8) is a Phosphothreonine. Residue Lys11 is modified to N6-succinyllysine. Lys16 bears the N6-acetyllysine; alternate mark. Position 16 is an N6-succinyllysine; alternate (Lys16). Tyr24 carries the post-translational modification Phosphotyrosine. Residue Lys40 is modified to N6-succinyllysine. His58 serves as a coordination point for O2. His87 lines the heme b pocket. At Ser102 the chain carries Phosphoserine. Phosphothreonine is present on Thr108. Phosphoserine is present on residues Ser124 and Ser131. 2 positions are modified to phosphothreonine: Thr134 and Thr137. The residue at position 138 (Ser138) is a Phosphoserine.

This sequence belongs to the globin family. As to quaternary structure, heterotetramer of two alpha chains and two beta chains. In terms of tissue distribution, red blood cells.

Functionally, involved in oxygen transport from the lung to the various peripheral tissues. Hemopressin acts as an antagonist peptide of the cannabinoid receptor CNR1. Hemopressin-binding efficiently blocks cannabinoid receptor CNR1 and subsequent signaling. The chain is Hemoglobin subunit alpha (HBA) from Tursiops truncatus (Atlantic bottle-nosed dolphin).